We begin with the raw amino-acid sequence, 301 residues long: tRNA pseudouridine synthase B (301 aa).

The active-site Nucleophile is the Asp45.

It belongs to the pseudouridine synthase TruB family. Type 1 subfamily.

It carries out the reaction uridine(55) in tRNA = pseudouridine(55) in tRNA. Functionally, responsible for synthesis of pseudouridine from uracil-55 in the psi GC loop of transfer RNAs. In Streptomyces coelicolor (strain ATCC BAA-471 / A3(2) / M145), this protein is tRNA pseudouridine synthase B.